Consider the following 304-residue polypeptide: N-carbamoyl-D-amino acid hydrolase (304 aa).

Residues 5–276 form the CN hydrolase domain; that stretch reads MILAVGQQGP…DEVITAAVDL (272 aa). Catalysis depends on residues Glu-47, Lys-127, and Cys-172.

As to quaternary structure, homotetramer.

It catalyses the reaction an N-carbamoyl-D-amino acid + H2O + 2 H(+) = a D-alpha-amino acid + NH4(+) + CO2. Functionally, the enzyme catalyzes the hydrolysis of N-carbamoyl-D-amino acids to the corresponding which are useful intermediates in the preparation of beta-lactam antibiotics. Industrial production of beta-lactam antibiotics is now being developed using this enzyme. In Rhizobium radiobacter (Agrobacterium tumefaciens), this protein is N-carbamoyl-D-amino acid hydrolase.